A 198-amino-acid chain; its full sequence is Beta-crystallin A1 (198 aa).

The interval 1–13 is N-terminal arm; it reads MLYLVLFLVPFNS. Beta/gamma crystallin 'Greek key' domains lie at 14–53 and 54–100; these read IQIT…KVEC and GAWI…RPIC. S-glutathionyl cysteine; alternate is present on residues Cys-65 and Cys-100. 2 positions are modified to S-methylcysteine; alternate: Cys-65 and Cys-100. A connecting peptide region spans residues 101-106; it reads SANHKE. Beta/gamma crystallin 'Greek key' domains are found at residues 107 to 148 and 149 to 197; these read SKIT…KIQC and GAWV…RRIQ.

The protein belongs to the beta/gamma-crystallin family. In terms of assembly, homo/heterodimer, or complexes of higher-order. The structure of beta-crystallin oligomers seems to be stabilized through interactions between the N-terminal arms. Interacts with CRYBA1.

In terms of biological role, crystallins are the dominant structural components of the vertebrate eye lens. This chain is Beta-crystallin A1, found in Mus musculus (Mouse).